A 349-amino-acid polypeptide reads, in one-letter code: uncharacterized protein (349 aa).

Residues Asn51–Gln160 form the THUMP domain.

This is an uncharacterized protein from Methanocaldococcus jannaschii (strain ATCC 43067 / DSM 2661 / JAL-1 / JCM 10045 / NBRC 100440) (Methanococcus jannaschii).